Consider the following 185-residue polypeptide: Ribosome-recycling factor (185 aa).

Belongs to the RRF family.

It localises to the cytoplasm. Responsible for the release of ribosomes from messenger RNA at the termination of protein biosynthesis. May increase the efficiency of translation by recycling ribosomes from one round of translation to another. The chain is Ribosome-recycling factor from Pseudomonas putida (strain GB-1).